The primary structure comprises 630 residues: Angiotensin-converting enzyme-related protein (630 aa).

A signal peptide spans 1–22 (MGACNITVLLLVIMLWLPHGLS). The 588-residue stretch at 28-615 (SASVLEARRF…SRLGVPLGWG (588 aa)) folds into the Peptidase M2 domain. Cystine bridges form between C142–C150 and C344–C362. H375 contacts Zn(2+). E376 serves as the catalytic Proton acceptor. Positions 379 and 403 each coordinate Zn(2+). H505 functions as the Proton donor in the catalytic mechanism. A disulfide bond links C530 and C548.

Belongs to the peptidase M2 family. Zn(2+) serves as cofactor. Glycosylated.

It localises to the secreted. It is found in the extracellular space. The catalysed reaction is Release of a C-terminal dipeptide, oligopeptide-|-Xaa-Yaa, when Xaa is not Pro, and Yaa is neither Asp nor Glu. Thus, conversion of angiotensin I to angiotensin II, with increase in vasoconstrictor activity, but no action on angiotensin II.. Inhibited by captopril, lisinopril, trandolaprilat, fosinoprilat and enalaprilat. May be involved in the specific maturation or degradation of a number of bioactive peptides. May have a role in the specification of heart progenitors. The polypeptide is Angiotensin-converting enzyme-related protein (Acer) (Drosophila melanogaster (Fruit fly)).